We begin with the raw amino-acid sequence, 1135 residues long: Peroxisomal ATPase PEX6 (1135 aa).

An ATP-binding site is contributed by Gly853–Thr860.

Belongs to the AAA ATPase family. Interacts with PEX1; forming the PEX1-PEX6 AAA ATPase complex, which is composed of a heterohexamer formed by a trimer of PEX1-PEX6 dimers.

It is found in the cytoplasm. Its subcellular location is the cytosol. The protein localises to the peroxisome membrane. The catalysed reaction is ATP + H2O = ADP + phosphate + H(+). Component of the PEX1-PEX6 AAA ATPase complex, a protein dislocase complex that mediates the ATP-dependent extraction of the PEX5 receptor from peroxisomal membranes, an essential step for PEX5 recycling. Specifically recognizes PEX5 monoubiquitinated at 'Cys-6', and pulls it out of the peroxisome lumen through the PEX2-PEX10-PEX12 retrotranslocation channel. Extraction by the PEX1-PEX6 AAA ATPase complex is accompanied by unfolding of the TPR repeats and release of bound cargo from PEX5. The polypeptide is Peroxisomal ATPase PEX6 (PEX6) (Pichia angusta (Yeast)).